A 178-amino-acid chain; its full sequence is Cytochrome b6-f complex iron-sulfur subunit (178 aa).

Residues 20–42 form a helical membrane-spanning segment; the sequence is LLTFGTATGVALGALYPVANYFM. Residues 65–161 form the Rieske domain; it reads KTGWLATHQA…VDIEDDAVLV (97 aa). [2Fe-2S] cluster is bound by residues Cys-107, His-109, Cys-125, and His-128. Cys-112 and Cys-127 form a disulfide bridge.

The protein belongs to the Rieske iron-sulfur protein family. As to quaternary structure, the 4 large subunits of the cytochrome b6-f complex are cytochrome b6, subunit IV (17 kDa polypeptide, PetD), cytochrome f and the Rieske protein, while the 4 small subunits are PetG, PetL, PetM and PetN. The complex functions as a dimer. It depends on [2Fe-2S] cluster as a cofactor.

The protein resides in the cellular thylakoid membrane. It catalyses the reaction 2 oxidized [plastocyanin] + a plastoquinol + 2 H(+)(in) = 2 reduced [plastocyanin] + a plastoquinone + 4 H(+)(out). Functionally, component of the cytochrome b6-f complex, which mediates electron transfer between photosystem II (PSII) and photosystem I (PSI), cyclic electron flow around PSI, and state transitions. The protein is Cytochrome b6-f complex iron-sulfur subunit of Prochlorococcus marinus (strain AS9601).